The sequence spans 556 residues: Valencene synthase (556 aa).

Polar residues predominate over residues 1–12 (MSTQVSASSLAQ). The interval 1–24 (MSTQVSASSLAQIPQPKNRPVANF) is disordered. Mg(2+) contacts are provided by Asp310, Asp314, and Glu462. Residues 310 to 314 (DDIHD) carry the DDXXD motif motif.

Belongs to the terpene synthase family. Tpsa subfamily. Requires Mg(2+) as cofactor. Expressed in flowers and anthers. Detected inside the pollen grains, but not in stems, leaves, tendrils, roots, seeds, pistils or caps.

Its subcellular location is the cytoplasm. It catalyses the reaction (2E,6E)-farnesyl diphosphate = (+)-valencene + diphosphate. The catalysed reaction is (2E,6E)-farnesyl diphosphate = (-)-7-epi-alpha-selinene + diphosphate. It functions in the pathway secondary metabolite biosynthesis; terpenoid biosynthesis. In terms of biological role, involved in the biosynthesis of valencene, a major volatile emitted from flowers of grapevine. Can use farnesyl diphosphate as substrate, but not geranyl diphosphate or geranylgeranyl diphosphate. Produces mainly (+)-valencene and (-)-7-epi-alpha-selinene along with five minor products. The protein is Valencene synthase (ValCS) of Vitis vinifera (Grape).